Reading from the N-terminus, the 235-residue chain is Phosphoribosylaminoimidazole-succinocarboxamide synthase (235 aa).

The protein belongs to the SAICAR synthetase family.

The enzyme catalyses 5-amino-1-(5-phospho-D-ribosyl)imidazole-4-carboxylate + L-aspartate + ATP = (2S)-2-[5-amino-1-(5-phospho-beta-D-ribosyl)imidazole-4-carboxamido]succinate + ADP + phosphate + 2 H(+). It participates in purine metabolism; IMP biosynthesis via de novo pathway; 5-amino-1-(5-phospho-D-ribosyl)imidazole-4-carboxamide from 5-amino-1-(5-phospho-D-ribosyl)imidazole-4-carboxylate: step 1/2. This is Phosphoribosylaminoimidazole-succinocarboxamide synthase from Streptococcus pneumoniae serotype 2 (strain D39 / NCTC 7466).